The following is a 209-amino-acid chain: Mitochondrial import inner membrane translocase subunit Tim23 (209 aa).

Helical transmembrane passes span 73–93, 125–145, and 181–197; these read FELAFFTIGGCCMTGAAFGAL, ALWANTLGSLALLYSAFGVII, and GLAGLTLTSVYALYNNW.

The protein belongs to the Tim17/Tim22/Tim23 family. As to quaternary structure, component of the TIM23 complex at least composed of TIMM23, TIMM17 (TIMM17A or TIMM17B) and TIMM50; within this complex, directly interacts with TIMM50. The complex interacts with the TIMM44 component of the PAM complex and with DNAJC15. Upon mitochondrial depolarization, interacts with PINK1; the interaction is required for PINK1 accumulation at the outer mitochondrial membrane, kinase activation by autophosphorylation and PRKN recruitement to mitochondria.

It localises to the mitochondrion inner membrane. Essential component of the TIM23 complex, a complex that mediates the translocation of transit peptide-containing proteins across the mitochondrial inner membrane. Has a role in the activation of stress-induced mitophagy by protecting PINK1 from OMA1-mediated degradation and facilitating its accumulation at the outer mitochondrial membrane in response to depolarization. In Rattus norvegicus (Rat), this protein is Mitochondrial import inner membrane translocase subunit Tim23 (Timm23).